The sequence spans 513 residues: ATP synthase subunit alpha (513 aa).

169–176 contacts ATP; it reads GDRQTGKT.

This sequence belongs to the ATPase alpha/beta chains family. F-type ATPases have 2 components, CF(1) - the catalytic core - and CF(0) - the membrane proton channel. CF(1) has five subunits: alpha(3), beta(3), gamma(1), delta(1), epsilon(1). CF(0) has three main subunits: a(1), b(2) and c(9-12). The alpha and beta chains form an alternating ring which encloses part of the gamma chain. CF(1) is attached to CF(0) by a central stalk formed by the gamma and epsilon chains, while a peripheral stalk is formed by the delta and b chains.

The protein localises to the cell inner membrane. It carries out the reaction ATP + H2O + 4 H(+)(in) = ADP + phosphate + 5 H(+)(out). Functionally, produces ATP from ADP in the presence of a proton gradient across the membrane. The alpha chain is a regulatory subunit. The sequence is that of ATP synthase subunit alpha from Hydrogenovibrio crunogenus (strain DSM 25203 / XCL-2) (Thiomicrospira crunogena).